Consider the following 411-residue polypeptide: C6 finger domain transcription factor hasA (411 aa).

Over residues 1–17 (MTSTLPYLTSPPATHPS) the composition is skewed to polar residues. The disordered stretch occupies residues 1–21 (MTSTLPYLTSPPATHPSNSDH). A DNA-binding region (zn(2)-C6 fungal-type) is located at residues 28–54 (CDSCHQCKVKCSGGSPCFRCTSKGLNC).

It localises to the nucleus. Transcription factor; part of the gene cluster that mediates the biosynthesis of hexadehydro-astechrome (HAS), a tryptophan-derived iron(III)-complex that acts as a virulence factor in infected mice. Positively regulates the expression of the HAS biosynthetic genes. This Aspergillus fumigatus (strain CBS 144.89 / FGSC A1163 / CEA10) (Neosartorya fumigata) protein is C6 finger domain transcription factor hasA.